A 367-amino-acid polypeptide reads, in one-letter code: Putative zinc metalloprotease mll0638 (367 aa).

Residue His20 participates in Zn(2+) binding. Glu21 is an active-site residue. His24 is a Zn(2+) binding site. 3 consecutive transmembrane segments (helical) span residues 108–130 (ATVV…VLFA), 291–313 (LGFE…LNLL), and 343–365 (MAYR…NDLF). A PDZ domain is found at 121–196 (TIVVFSVLFA…ITFVMLRDGK (76 aa)).

It belongs to the peptidase M50B family. Requires Zn(2+) as cofactor.

It is found in the cell inner membrane. This chain is Putative zinc metalloprotease mll0638, found in Mesorhizobium japonicum (strain LMG 29417 / CECT 9101 / MAFF 303099) (Mesorhizobium loti (strain MAFF 303099)).